A 202-amino-acid chain; its full sequence is ATP-dependent Clp protease proteolytic subunit (202 aa).

The active-site Nucleophile is the Ser-106. The active site involves His-131.

It belongs to the peptidase S14 family. As to quaternary structure, fourteen ClpP subunits assemble into 2 heptameric rings which stack back to back to give a disk-like structure with a central cavity, resembling the structure of eukaryotic proteasomes.

The protein localises to the cytoplasm. It catalyses the reaction Hydrolysis of proteins to small peptides in the presence of ATP and magnesium. alpha-casein is the usual test substrate. In the absence of ATP, only oligopeptides shorter than five residues are hydrolyzed (such as succinyl-Leu-Tyr-|-NHMec, and Leu-Tyr-Leu-|-Tyr-Trp, in which cleavage of the -Tyr-|-Leu- and -Tyr-|-Trp bonds also occurs).. Its function is as follows. Cleaves peptides in various proteins in a process that requires ATP hydrolysis. Has a chymotrypsin-like activity. Plays a major role in the degradation of misfolded proteins. The sequence is that of ATP-dependent Clp protease proteolytic subunit from Shewanella baltica (strain OS223).